The following is a 1016-amino-acid chain: MPGKLKVKIVAGRHLPVMDRASDLTDAFVEVKFGNTTFKTDVYLKSLNPQWNSEWFKFEVDDEDLQDEPLQITVLDHDTYSANDAIGKVYIDIDPLLYSEAATVISGWFPIYDTIHGIRGEINVVVKVDLFNDSNRFRQSSCGVKFFCTTSIPKCYRAVVIHGFVEELVVNEDPEYQWIDRIRTPRASNEARQRLISLMSGELQRKIGLKVLEMRGNAVVGYLQCFDLEGESGLVVRAIGTACTLDKLSSPAAFLPACSSPSRELKEIPFNEDPNPNTHSSGPSTPLKNQTYSFSPSKSYSRQSSSSDTDLSLTPKTGMGSGSAGKEGGPFKALLRQQTQSALEQREFPFLTLTAFPPGLLVHVGGVVSARSVKLLDRIHNPDEPETRDAWWAEIRQEIKSHAKALGCHAVVGYSESTSICEEVCILSASGTAAVLNPRFLQEGTVEGCLEQRIEENLPVGCGFCHIPYDELNMPFPAHLTYCYNCRKQKVPDVLFTTIDLPTDAVVVGKGCLIQARLCRLKKKAQAEANATAISNLLPFMEYEVHTQLMNKLKLKGMNALFGLRIQITVGETMLMGLASATGVYLAALPTPGGIQIAGKTPNDGSYEQHISHMQKRINDTIAKNKELYEITPPEVSEEMIGSPIPEPRQRSRLLRSQSESSDEVTELDLSHGKKDAFVLEIDDTDAMEDVHSLLTDAPPPSGFYSCNTEIMPGINNWTSEIQMFTSVRVVRLSSLNLTNQALNKNFNGLCENLLKSLYFKLRSMTPCCLCHVNFTVSLPEDELIQVTVTAVAITFDKNQALQTTKPHVEKSLQRASTDNEELLQFPLELCSDSLPPHPFPAAKEHLESANSNSGIPAAQRAVTVEKASAMGDGNFRNRSAPPCASPTVGVVKMTPLSFIPGAKITKYLGIINMFFIRETTSLREEGGVSGFLHAFIAEVFAMVRAHVAALGGNAVVSYIMKQCVFMENPSKNQAQCLINVSGDAVVFVRDSDLEVMSSQQPAANCQPSCTGEVTT.

Positions 1–109 (MPGKLKVKIV…EAATVISGWF (109 aa)) constitute a C2 domain. Residues aspartate 19, aspartate 26, aspartate 76, aspartate 78, serine 81, and aspartate 84 each contribute to the Ca(2+) site. A Phosphoserine; by PKB/AKT2 modification is found at serine 197. 2 positions are modified to phosphoserine: serine 200 and serine 260. The disordered stretch occupies residues 265–330 (LKEIPFNEDP…SGSAGKEGGP (66 aa)). Residues 274–289 (PNPNTHSSGPSTPLKN) show a composition bias toward polar residues. The segment covering 290–318 (QTYSFSPSKSYSRQSSSSDTDLSLTPKTG) has biased composition (low complexity). Serine 293, serine 295, serine 304, serine 305, and serine 306 each carry phosphoserine. Threonine 317 carries the post-translational modification Phosphothreonine. A compositionally biased stretch (gly residues) spans 319 to 328 (MGSGSAGKEG). Serine 323 is subject to Phosphoserine. At threonine 601 the chain carries Phosphothreonine. Positions 636 to 668 (VSEEMIGSPIPEPRQRSRLLRSQSESSDEVTEL) are disordered. Phosphoserine is present on residues serine 643, serine 657, serine 659, serine 661, and serine 662. Threonine 666 carries the post-translational modification Phosphothreonine. Serine 671, serine 817, and serine 869 each carry phosphoserine.

Ca(2+) is required as a cofactor. In terms of processing, phosphorylated on Ser-197 by active myristoylated kinase AKT2; insulin-stimulated phosphorylation by AKT2 regulates SLC2A4/GLUT4 translocation into the plasma membrane. Expressed in liver, muscle and fat.

Its subcellular location is the cytoplasmic vesicle membrane. It localises to the cytoplasm. The protein localises to the cell cortex. It is found in the cell membrane. The protein resides in the cell projection. Its subcellular location is the ruffle. Its function is as follows. Required for insulin-stimulated glucose transport and glucose transporter SLC2A4/GLUT4 translocation from intracellular glucose storage vesicle (GSV) to the plasma membrane (PM) in adipocytes. Binds phospholipid membranes in a calcium-dependent manner and is necessary for the optimal membrane fusion between SLC2A4/GLUT4 GSV and the PM. The polypeptide is C2 domain-containing protein 5 (C2cd5) (Mus musculus (Mouse)).